We begin with the raw amino-acid sequence, 331 residues long: MGNSIYRFLCGLCSPSPEYQPHGAHPAVAALGRDIQQFEATSQVPDGLSRHVVSSKKAQANWYKKLIVTWKKARPTPRTPEEAARLVVTTLKNHQKADVEGFLVFYGLPIPNAAASTPAPHTAHVPKPQGCKFELHTLPVDAKAVADGDTITVYIDTADPRESGNVPREIQKAAAERTRARAARDYQKADGLQKMIADAGYRQVPNARGEEVLAKKYRIRLRGIDAPESAMPYGKEAKEALLKMVQGKSLKVYVYDEDRYGRCVGDIYCDGVFVQEQMLKKGCAWHYTAYDQRPELAKWEKQAQSGRKGLWAASRPQKPWEWRRDKRNGTA.

A lipid anchor (N-myristoyl glycine) is attached at glycine 2. The S-palmitoyl cysteine moiety is linked to residue cysteine 10. The 178-residue stretch at 136–313 (HTLPVDAKAV…QSGRKGLWAA (178 aa)) folds into the TNase-like domain. Aspartate 149 is a binding site for Ca(2+). Arginine 220 is an active-site residue. Aspartate 225 contributes to the Ca(2+) binding site. Active-site residues include glutamate 228 and arginine 262. The segment at 306–331 (GRKGLWAASRPQKPWEWRRDKRNGTA) is disordered. Basic and acidic residues predominate over residues 318-331 (KPWEWRRDKRNGTA).

It belongs to the thermonuclease family. Requires Ca(2+) as cofactor.

The protein resides in the cell membrane. Its function is as follows. Enzyme that catalyzes the hydrolysis of both DNA and RNA at the 5' position of the phosphodiester bond. The polypeptide is Probable staphylococcal-like nuclease CAN1 (Oryza sativa subsp. japonica (Rice)).